Reading from the N-terminus, the 348-residue chain is Flagellar P-ring protein (348 aa).

Residues 1-16 form the signal peptide; it reads MRVLTIFLLFMTSIFA.

It belongs to the FlgI family. In terms of assembly, the basal body constitutes a major portion of the flagellar organelle and consists of four rings (L,P,S, and M) mounted on a central rod.

Its subcellular location is the periplasm. The protein localises to the bacterial flagellum basal body. Its function is as follows. Assembles around the rod to form the L-ring and probably protects the motor/basal body from shearing forces during rotation. This is Flagellar P-ring protein from Campylobacter jejuni subsp. jejuni serotype O:6 (strain 81116 / NCTC 11828).